The following is a 318-amino-acid chain: NADH-ubiquinone oxidoreductase chain 1 (318 aa).

The next 8 helical transmembrane spans lie at phenylalanine 2–leucine 22, phenylalanine 69–leucine 89, leucine 102–alanine 122, methionine 146–alanine 166, histidine 171–alanine 191, leucine 222–phenylalanine 242, glutamate 253–valine 273, and leucine 294–isoleucine 314.

This sequence belongs to the complex I subunit 1 family. In terms of assembly, core subunit of respiratory chain NADH dehydrogenase (Complex I) which is composed of 45 different subunits.

The protein localises to the mitochondrion inner membrane. The catalysed reaction is a ubiquinone + NADH + 5 H(+)(in) = a ubiquinol + NAD(+) + 4 H(+)(out). Functionally, core subunit of the mitochondrial membrane respiratory chain NADH dehydrogenase (Complex I) which catalyzes electron transfer from NADH through the respiratory chain, using ubiquinone as an electron acceptor. Essential for the catalytic activity and assembly of complex I. In Elephas maximus (Indian elephant), this protein is NADH-ubiquinone oxidoreductase chain 1 (MT-ND1).